The sequence spans 155 residues: uncharacterized protein (155 aa).

In terms of domain architecture, HTH asnC-type spans 4–65 (IDEIDEVIVR…VVDPSFFGEF (62 aa)). The H-T-H motif DNA-binding region spans 23–42 (LTELGRKVGLTASAVKNRIE).

This is an uncharacterized protein from Pyrococcus horikoshii (strain ATCC 700860 / DSM 12428 / JCM 9974 / NBRC 100139 / OT-3).